The chain runs to 209 residues: CASP-like protein 2A2 (209 aa).

At 1-37 (MSKTAGVGRLGGARAADAAQQQQLAAGDAAVARAARP) the chain is on the cytoplasmic side. A helical transmembrane segment spans residues 38 to 58 (IETLLRAAPLVLCVAAMTLML). Residues 59-79 (RDQQSNEYGTVAYSDLGGFKY) lie on the Extracellular side of the membrane. The helical transmembrane segment at 80-100 (LVYANGLCAAYSLASAFYTAV) threads the bilayer. Topologically, residues 101–109 (PRPATVSRS) are cytoplasmic. Residues 110-130 (WVVFLLDQVFTYLILAAGAAA) traverse the membrane as a helical segment. Residues 131 to 161 (AELLYLAYNGDKEVTWSEACGVFGSFCRQAR) are Extracellular-facing. A helical transmembrane segment spans residues 162-182 (ISVAITFGAVLCFILLSLLSS). The Cytoplasmic segment spans residues 183–209 (YRLFSAYEAPPPSALGSKGVEIAAYPR).

It belongs to the Casparian strip membrane proteins (CASP) family. In terms of assembly, homodimer and heterodimers.

The protein resides in the cell membrane. In Zea mays (Maize), this protein is CASP-like protein 2A2.